A 599-amino-acid polypeptide reads, in one-letter code: Glycerophosphodiester phosphodiesterase domain-containing protein 5 (599 aa).

At 1–42 (MVKHQPLQYYEPQLCLSCLTGIYGCRWKRYQRSHDDTTKWER) the chain is on the cytoplasmic side. 2 disulfides stabilise this stretch: C15/C18 and C25/C576. The chain crosses the membrane as a helical span at residues 43–63 (LWFLILTSSFFLTLVWFYFWW). Residues 64–87 (EVHNDYNEINWFLYNRMGYWSDWS) lie on the Extracellular side of the membrane. The helical transmembrane segment at 88–108 (IPILVTTAAGFTYITVLLILA) threads the bilayer. Residues 109–125 (LCHIAVGQQMNLHWLHK) are Cytoplasmic-facing. The chain crosses the membrane as a helical span at residues 126-146 (IGLMTTLITTVVTMSSIAQLW). Topologically, residues 147-160 (DDEWEMVFISLQAT) are extracellular. The chain crosses the membrane as a helical span at residues 161-181 (APFLHIGALAAVTALSWLIAG). Residues 182 to 192 (QFARMEKATSQ) lie on the Cytoplasmic side of the membrane. The helical transmembrane segment at 193 to 213 (MLMVTAYLAVVVALYLVPLTI) threads the bilayer. At 214–497 (SSPCIMEKKA…IWLMPPDEYR (284 aa)) the chain is on the extracellular side. The region spanning 228–485 (PAIIGHRGAP…DSSHVLRKVP (258 aa)) is the GP-PDE domain. Residues N301, N336, N352, N374, and N448 are each glycosylated (N-linked (GlcNAc...) asparagine). A helical membrane pass occupies residues 498–518 (LIWITSDLISFIIIVGVFIFQ). The Cytoplasmic segment spans residues 519-599 (NYHNDQWRLG…DHRDTRLRMN (81 aa)).

The protein belongs to the glycerophosphoryl diester phosphodiesterase family. As to quaternary structure, interacts with PRDX1; forms a mixed-disulfide with PRDX1, leading to disrupt intramolecular disulfide bond between Cys-25 and Cys-576. In terms of processing, intramolecular disulfide bond between Cys-25 and Cys-576 is reduced by PRDX1. Detected in mature motor neurons.

It is found in the endomembrane system. Its subcellular location is the cytoplasm. The protein resides in the perinuclear region. The protein localises to the cell projection. It localises to the growth cone. It catalyses the reaction a 1,2-diacyl-sn-glycero-3-phospho-(1D-myo-inositol-4,5-bisphosphate) + H2O = 1D-myo-inositol 1,4,5-trisphosphate + a 1,2-diacyl-sn-glycerol + H(+). The enzyme catalyses sn-glycerol 3-phosphocholine + H2O = sn-glycerol 3-phosphate + choline + H(+). Its activity is regulated as follows. Activated by PRDX1 by reduction of an intramolecular disulfide bond. Its function is as follows. Glycerophosphodiester phosphodiesterase that promotes cell cycle exit and drives spinal motor neuron differentiation. Mediates the cleavage of glycosylphosphatidylinositol (GPI) anchor of target proteins: removes the GPI-anchor of RECK, leading to release RECK from the plasma membrane. May contribute to the osmotic regulation of cellular glycerophosphocholine. In Gallus gallus (Chicken), this protein is Glycerophosphodiester phosphodiesterase domain-containing protein 5 (GDPD5).